The sequence spans 129 residues: uncharacterized protein (129 aa).

The 124-residue stretch at 6–129 folds into the VOC domain; sequence QVHHIAIIAT…DGLPLELYEQ (124 aa). A divalent metal cation contacts are provided by histidine 9, glutamate 57, histidine 78, and glutamate 125.

To B.subtilis YwkD.

This is an uncharacterized protein from Escherichia coli (strain K12).